The sequence spans 1505 residues: Myosin-6 (1505 aa).

In terms of domain architecture, Myosin N-terminal SH3-like spans serine 8 to valine 57. Residues serine 62–threonine 731 enclose the Myosin motor domain. ATP is bound by residues glycine 156–threonine 163 and asparagine 209–lysine 217. Actin-binding regions lie at residues leucine 495 to phenylalanine 529, threonine 531 to valine 554, phenylalanine 589 to leucine 612, and leucine 612 to asparagine 634. IQ domains follow at residues leucine 734–glutamine 763, leucine 757–alanine 786, arginine 782–serine 811, leucine 805–alanine 834, glutamine 830–threonine 859, and leucine 853–glutamate 882. Residues threonine 883–threonine 1048 are a coiled coil. In terms of domain architecture, Dilute spans aspartate 1148–glutamate 1452.

Belongs to the TRAFAC class myosin-kinesin ATPase superfamily. Myosin family. Plant myosin class XI subfamily. In terms of assembly, homodimer. Interacts with RABC2A and RABD1. As to expression, expressed in flowers, leaves, roots and stems.

The protein resides in the cytoplasm. Its function is as follows. Myosin heavy chain that is required for the cell cycle-regulated transport of various organelles and proteins for their segregation. Functions by binding with its tail domain to receptor proteins on organelles and exerting force with its N-terminal motor domain against actin filaments, thereby transporting its cargo along polarized actin cables. Involved in the tip growth of root hair cells. Plays a major role in trafficking of Golgi stacks, mitochondria and peroxisomes during root hair development. Targets the peroxisome through an interaction with RABC2A. Required for development of pavement cells, trichomes, and stigmatic papillae. In Arabidopsis thaliana (Mouse-ear cress), this protein is Myosin-6 (XI-2).